Reading from the N-terminus, the 247-residue chain is tRNA pseudouridine synthase A (247 aa).

The active-site Nucleophile is Asp53. Tyr111 is a substrate binding site.

Belongs to the tRNA pseudouridine synthase TruA family. As to quaternary structure, homodimer.

It catalyses the reaction uridine(38/39/40) in tRNA = pseudouridine(38/39/40) in tRNA. Its function is as follows. Formation of pseudouridine at positions 38, 39 and 40 in the anticodon stem and loop of transfer RNAs. The chain is tRNA pseudouridine synthase A from Lacticaseibacillus casei (strain BL23) (Lactobacillus casei).